A 423-amino-acid chain; its full sequence is UPF0229 protein PFLU_5583 (423 aa).

The segment at 64 to 109 (LHHGRGGKQTVVHPGNKEFTTGEHIQRPQGGGGGKGPGKAGNSGEG) is disordered. Residues 92–107 (QGGGGGKGPGKAGNSG) are compositionally biased toward gly residues.

This sequence belongs to the UPF0229 family.

The protein is UPF0229 protein PFLU_5583 of Pseudomonas fluorescens (strain SBW25).